The following is a 512-amino-acid chain: Maturase K (512 aa).

Belongs to the intron maturase 2 family. MatK subfamily.

The protein resides in the plastid. It is found in the chloroplast. Usually encoded in the trnK tRNA gene intron. Probably assists in splicing its own and other chloroplast group II introns. The protein is Maturase K of Wolffiella gladiata (Florida mud-midget).